A 71-amino-acid chain; its full sequence is Large ribosomal subunit protein bL31 (71 aa).

Positions 16, 18, 38, and 41 each coordinate Zn(2+).

This sequence belongs to the bacterial ribosomal protein bL31 family. Type A subfamily. As to quaternary structure, part of the 50S ribosomal subunit. It depends on Zn(2+) as a cofactor.

In terms of biological role, binds the 23S rRNA. The polypeptide is Large ribosomal subunit protein bL31 (Neisseria meningitidis serogroup A / serotype 4A (strain DSM 15465 / Z2491)).